Reading from the N-terminus, the 350-residue chain is DNA polymerase IV (350 aa).

Positions 5-181 constitute a UmuC domain; it reads IMHYDMDAFY…KKIKIIPGVG (177 aa). Asp9 and Asp99 together coordinate Mg(2+). The active site involves Glu100.

The protein belongs to the DNA polymerase type-Y family. As to quaternary structure, monomer. It depends on Mg(2+) as a cofactor.

Its subcellular location is the cytoplasm. The catalysed reaction is DNA(n) + a 2'-deoxyribonucleoside 5'-triphosphate = DNA(n+1) + diphosphate. Its function is as follows. Poorly processive, error-prone DNA polymerase involved in untargeted mutagenesis. Copies undamaged DNA at stalled replication forks, which arise in vivo from mismatched or misaligned primer ends. These misaligned primers can be extended by PolIV. Exhibits no 3'-5' exonuclease (proofreading) activity. May be involved in translesional synthesis, in conjunction with the beta clamp from PolIII. The chain is DNA polymerase IV from Fusobacterium nucleatum subsp. nucleatum (strain ATCC 25586 / DSM 15643 / BCRC 10681 / CIP 101130 / JCM 8532 / KCTC 2640 / LMG 13131 / VPI 4355).